A 111-amino-acid polypeptide reads, in one-letter code: Flagellar hook-basal body complex protein FliE (111 aa).

The protein belongs to the FliE family.

Its subcellular location is the bacterial flagellum basal body. This chain is Flagellar hook-basal body complex protein FliE, found in Brucella ovis (strain ATCC 25840 / 63/290 / NCTC 10512).